A 317-amino-acid chain; its full sequence is Melanocyte-stimulating hormone receptor (317 aa).

Topologically, residues Met-1 to Glu-37 are extracellular. The N-linked (GlcNAc...) asparagine glycan is linked to Asn-29. Residues Val-38–Ile-63 traverse the membrane as a helical segment. The Cytoplasmic segment spans residues Ala-64–Pro-72. A helical transmembrane segment spans residues Met-73–Leu-93. The Extracellular portion of the chain corresponds to Glu-94–Asn-118. A helical membrane pass occupies residues Ile-119–Val-140. The Cytoplasmic portion of the chain corresponds to Asp-141–Arg-163. Residues Ala-164–Tyr-183 traverse the membrane as a helical segment. The Extracellular portion of the chain corresponds to Asn-184 to Cys-191. The helical transmembrane segment at Leu-192–Leu-211 threads the bilayer. The Cytoplasmic portion of the chain corresponds to Ala-212–Ala-240. The chain crosses the membrane as a helical span at residues Ala-241–Leu-266. Residues Cys-267 to Asn-279 lie on the Extracellular side of the membrane. The helical transmembrane segment at Phe-280–Phe-300 threads the bilayer. Residues Arg-301–Trp-317 are Cytoplasmic-facing. Residue Cys-315 is the site of S-palmitoyl cysteine attachment.

Belongs to the G-protein coupled receptor 1 family. In terms of assembly, interacts with MGRN1, but does not undergo MGRN1-mediated ubiquitination; this interaction competes with GNAS-binding and thus inhibits agonist-induced cAMP production. Interacts with OPN3; the interaction results in a decrease in MC1R-mediated cAMP signaling and ultimately a decrease in melanin production in melanocytes.

The protein resides in the cell membrane. Its function is as follows. Receptor for MSH (alpha, beta and gamma) and ACTH. The activity of this receptor is mediated by G proteins which activate adenylate cyclase. Mediates melanogenesis, the production of eumelanin (black/brown) and phaeomelanin (red/yellow), via regulation of cAMP signaling in melanocytes. This is Melanocyte-stimulating hormone receptor (MC1R) from Equus caballus (Horse).